A 300-amino-acid chain; its full sequence is Lysophosphatidic acid:oleoyl-CoA acyltransferase 1 (300 aa).

Residues 33–53 (LLGILGVKTIIMLPLIMLYLL) traverse the membrane as a helical segment. The short motif at 101-106 (CTSPLD) is the HXXXXD motif element.

The protein belongs to the 1-acyl-sn-glycerol-3-phosphate acyltransferase family.

The protein resides in the lipid droplet. The protein localises to the endoplasmic reticulum membrane. The enzyme catalyses a 1-acyl-sn-glycero-3-phosphate + an acyl-CoA = a 1,2-diacyl-sn-glycero-3-phosphate + CoA. It catalyses the reaction 1-hexadecanoyl-sn-glycero-3-phosphate + (9Z)-octadecenoyl-CoA = 1-hexadecanoyl-2-(9Z-octadecenoyl)-sn-glycero-3-phosphate + CoA. Functionally, acyl-CoA-dependent lysophosphatidic acid acyltransferase with preference for oleoyl-CoA. Involved in triacylglyceride homeostasis and lipid droplet formation. Involved in vacuolar protein sorting. The chain is Lysophosphatidic acid:oleoyl-CoA acyltransferase 1 from Saccharomyces cerevisiae (strain ATCC 204508 / S288c) (Baker's yeast).